Reading from the N-terminus, the 1728-residue chain is Nebulin-related-anchoring protein (1728 aa).

In terms of domain architecture, LIM zinc-binding spans 4–64 (QACSRCGYGV…HAHNPKNNTF (61 aa)). 41 Nebulin repeats span residues 173-200 (TPAY…ERVS), 201-235 (TFTP…QQRG), 244-271 (TPAY…REMK), 313-340 (TPAY…KMKG), 345-379 (HSLA…NSKG), 386-414 (ETPQ…TQLR), 416-450 (HYDG…HDVV), 484-518 (KFSS…RNKL), 519-553 (NYTL…KTKG), 555-589 (GFEM…KMKG), 599-623 (LLHS…ESKT), 624-658 (HFNL…DYTV), 659-689 (LPED…WMRG), 699-721 (NLEQ…RVDE), 723-757 (KFTS…QSVH), 758-792 (QYTI…KQKA), 794-828 (GFEL…RSRG), 841-866 (QMSH…DTRS), 867-893 (QCHI…VGYR), 898-932 (CFTA…WMKG), 943-960 (VEQA…KYRQ), 966-1000 (KFTS…NVKH), 1001-1035 (HYTQ…RLRD), 1037-1071 (GYKL…RMKG), 1075-1109 (GSRS…HAKA), 1110-1136 (HFHL…QDYR), 1141-1175 (QHTV…FMRG), 1180-1203 (VPGT…KYRQ), 1209-1243 (KYTA…DARH), 1244-1278 (QYTM…NLRA), 1280-1314 (GYKL…KERG), 1318-1352 (GVRN…SSQA), 1353-1379 (QCHL…HDYR), 1384-1418 (EFTA…GMKG), 1425-1446 (QSPQ…KYRK), 1452-1478 (KFTT…RLYR), 1487-1521 (RYTP…QSRA), 1523-1557 (GYDF…RDRG), 1561-1595 (GYRS…KGRS), 1596-1630 (QFHS…QHTS), and 1637-1661 (LKHA…LTRG). Thr-203 is subject to Phosphothreonine. Position 1078 is a phosphoserine (Ser-1078).

In terms of assembly, interacts with actin, alpha-actinin, KLHL41, TLN1 and VCL. Interacts with CSRP3. Expressed in cardiac and skeletal muscle. Not detected in kidney, spleen, liver, brain, lung, stomach or uterus.

In terms of biological role, may be involved in anchoring the terminal actin filaments in the myofibril to the membrane and in transmitting tension from the myofibrils to the extracellular matrix. The protein is Nebulin-related-anchoring protein of Mus musculus (Mouse).